A 347-amino-acid chain; its full sequence is MDLQAQLEELRKSTQATLKEMSGNHSKELQDLRVKVLGKKGSLTELLKGLKDLPNELRPVVGKQVNEVRDVLTKAFEEQAKIVEAAKIQAQLESETLDVTLPGRQIHLGNRHVLSQISEEIEDIFLGMGFQVVDGYEVEQDYYNFERMNLPKDHPARDMQDTFYISEDILLRTHTSPVQARTLDKHDFSKGPLKMISPGRVFRRDTDDATHSHQFHQIEGLVVGKNISMGDLKGTLEMISKKMFGEDRKIRLRPSYFPFTEPSVEVDVSCFKCGGKGCNVCKKTGWIEILGAGMVHPSVLEMSGVNSEEYSGFAFGLGQERMAMLRYGINDIRGFYQGDSRFTEQFN.

Residue Glu261 coordinates Mg(2+).

The protein belongs to the class-II aminoacyl-tRNA synthetase family. Phe-tRNA synthetase alpha subunit type 1 subfamily. In terms of assembly, tetramer of two alpha and two beta subunits. Requires Mg(2+) as cofactor.

It localises to the cytoplasm. It carries out the reaction tRNA(Phe) + L-phenylalanine + ATP = L-phenylalanyl-tRNA(Phe) + AMP + diphosphate + H(+). This is Phenylalanine--tRNA ligase alpha subunit from Streptococcus mutans serotype c (strain ATCC 700610 / UA159).